We begin with the raw amino-acid sequence, 89 residues long: uncharacterized protein (89 aa).

This is an uncharacterized protein from Vaccinia virus (strain Copenhagen) (VACV).